A 491-amino-acid polypeptide reads, in one-letter code: Sucrose transport protein SUC7 (491 aa).

The span at 1 to 13 shows a compositional bias: basic and acidic residues; that stretch reads MSDLQANKDETTV. Residues 1-25 are disordered; that stretch reads MSDLQANKDETTVDRQSSSSVDLDG. The Cytoplasmic segment spans residues 1–32; sequence MSDLQANKDETTVDRQSSSSVDLDGPSPLRKM. Phosphoserine is present on Ser17. The helical transmembrane segment at 33-53 threads the bilayer; the sequence is ISVASIAAGIQFGWALQLSLL. Over 54–67 the chain is Extracellular; the sequence is TPYVQLLGVPHKWP. A helical transmembrane segment spans residues 68 to 88; it reads SFIWLCGPVSGLLVQPSVGYF. The Cytoplasmic portion of the chain corresponds to 89 to 100; sequence SDRCTSRFGRRR. Residues 101–121 traverse the membrane as a helical segment; that stretch reads PFIATGALLVAVSVVLIGYAA. The Extracellular segment spans residues 122-138; sequence DFGHSMGDKIDKPVKMR. A helical transmembrane segment spans residues 139 to 159; it reads AVVIFALGFWILDVANNTLQG. At 160–180 the chain is on the cytoplasmic side; the sequence is PCRAFLGDLAAGDAQKTRTAN. The helical transmembrane segment at 181-201 threads the bilayer; that stretch reads AFFSFFMAVGNVLGYAAGSYT. Topologically, residues 202–223 are extracellular; it reads NLYKIFPFTMTKACDIYCANLK. A helical transmembrane segment spans residues 224-244; that stretch reads SCFFLSITLLLVVTIIALWYV. The Cytoplasmic portion of the chain corresponds to 245–276; sequence EDKQWSPKADSDNEKTPFFGEIFGAFKVMKRP. Residues 277-297 traverse the membrane as a helical segment; the sequence is MWMLLIVTALNWIAWFPFLLY. The Extracellular portion of the chain corresponds to 298-323; it reads DTDWMGREVYGGDSKGDDKMKKLYNQ. Residues 324 to 344 traverse the membrane as a helical segment; that stretch reads GIHVGALGLMLNSIVLGVMSL. At 345-358 the chain is on the cytoplasmic side; sequence GIEGISRKMGGAKR. The helical transmembrane segment at 359-379 threads the bilayer; the sequence is LWGAVNIILAVCLAMTVLVTK. The Extracellular portion of the chain corresponds to 380 to 402; it reads KAEEHRRIAGPMALPTDGIRAGA. A helical transmembrane segment spans residues 403–423; it reads LTLFALLGIPLAITFSIPFAL. Residues 424–443 lie on the Cytoplasmic side of the membrane; sequence ASIISSSSGAGQRLSLGVLN. The helical transmembrane segment at 444-464 threads the bilayer; that stretch reads MAIVIPQMIVSFGVGPIDALF. The Extracellular segment spans residues 465–468; sequence GDGN. Residues 469-489 traverse the membrane as a helical segment; it reads LPGFVVGAIAAAVSSIVAFTV. The Cytoplasmic segment spans residues 490 to 491; sequence LP.

Belongs to the glycoside-pentoside-hexuronide (GPH) cation symporter transporter (TC 2.A.2.4) family. As to expression, expressed in anthers.

It is found in the cell membrane. The protein operates within glycan biosynthesis; sucrose metabolism. In terms of biological role, may be responsible for the transport of glucosides into the cell, with the concomitant uptake of protons (symport system). Does not seem to transport sucrose. This chain is Sucrose transport protein SUC7, found in Arabidopsis thaliana (Mouse-ear cress).